The chain runs to 197 residues: Imidazoleglycerol-phosphate dehydratase (197 aa).

This sequence belongs to the imidazoleglycerol-phosphate dehydratase family.

Its subcellular location is the cytoplasm. It catalyses the reaction D-erythro-1-(imidazol-4-yl)glycerol 3-phosphate = 3-(imidazol-4-yl)-2-oxopropyl phosphate + H2O. It functions in the pathway amino-acid biosynthesis; L-histidine biosynthesis; L-histidine from 5-phospho-alpha-D-ribose 1-diphosphate: step 6/9. This Pseudomonas putida (strain GB-1) protein is Imidazoleglycerol-phosphate dehydratase.